The sequence spans 208 residues: N-(5'-phosphoribosyl)anthranilate isomerase (208 aa).

The protein belongs to the TrpF family.

It carries out the reaction N-(5-phospho-beta-D-ribosyl)anthranilate = 1-(2-carboxyphenylamino)-1-deoxy-D-ribulose 5-phosphate. It participates in amino-acid biosynthesis; L-tryptophan biosynthesis; L-tryptophan from chorismate: step 3/5. This chain is N-(5'-phosphoribosyl)anthranilate isomerase, found in Neisseria gonorrhoeae (strain NCCP11945).